The primary structure comprises 543 residues: Protein GPR108 (543 aa).

The signal sequence occupies residues 1–32 (MAVSERRGLGRGSPAEWGQRLLLVLLLGGCSG). Residues Asn57 and Asn109 are each glycosylated (N-linked (GlcNAc...) asparagine). A disordered region spans residues 149–186 (SKPGLPKPQATVPRKVDGGGTSAASKPKSTPAVIQGPS). Residues Asn200, Asn204, and Asn228 are each glycosylated (N-linked (GlcNAc...) asparagine). A run of 7 helical transmembrane segments spans residues 263 to 283 (LYMVMSACFLAAGIFWVSILC), 292 to 312 (IHWLMAALAFTKSISLLFHSI), 336 to 356 (LLKGALLFITIALIGSGWAFI), 367 to 387 (VFGIVIPMQVLANVAYIIIES), 401 to 421 (ILFLVDLICCGAILFPVVWSI), 449 to 469 (VMVICYVYFTRIIAILLQVAV), and 473 to 493 (WQWLYQLLVEGSTLAFFVLTG). Asn534 is a glycosylation site (N-linked (GlcNAc...) asparagine).

The protein belongs to the LU7TM family.

It is found in the golgi apparatus. Its subcellular location is the cis-Golgi network membrane. It localises to the trans-Golgi network membrane. The protein localises to the golgi apparatus membrane. Functionally, may play a role in intracellular immune modulation by activating NF-kappaB response and attenuating Toll-like-receptor response. Its function is as follows. (Microbial infection) Plays an essential function in adeno-associated virus (AAV) transduction across multiple serotypes except AAV5. May play a critical role in mediating the endosomal virus escape or in the AAV virions trafficking from endosomes to the nucleus. In Homo sapiens (Human), this protein is Protein GPR108.